The primary structure comprises 490 residues: Cytochrome P450 2C55 (490 aa).

Cys435 is a binding site for heme.

The protein belongs to the cytochrome P450 family. Requires heme as cofactor.

The protein localises to the endoplasmic reticulum membrane. Its subcellular location is the microsome membrane. It catalyses the reaction an organic molecule + reduced [NADPH--hemoprotein reductase] + O2 = an alcohol + oxidized [NADPH--hemoprotein reductase] + H2O + H(+). Metabolizes arachidonic acid mainly to 19-hydroxyeicosatetraenoic acid (HETE). This is Cytochrome P450 2C55 (Cyp2c55) from Rattus norvegicus (Rat).